Reading from the N-terminus, the 387-residue chain is Phosphoglycerate kinase (387 aa).

Substrate contacts are provided by residues 21–23 (DLN), Arg-36, 59–62 (HLGR), Arg-113, and Arg-146. Residues Lys-197, Glu-314, and 340–343 (GGDT) each bind ATP.

This sequence belongs to the phosphoglycerate kinase family. Monomer.

The protein localises to the cytoplasm. The catalysed reaction is (2R)-3-phosphoglycerate + ATP = (2R)-3-phospho-glyceroyl phosphate + ADP. Its pathway is carbohydrate degradation; glycolysis; pyruvate from D-glyceraldehyde 3-phosphate: step 2/5. The chain is Phosphoglycerate kinase from Pseudomonas fluorescens (strain Pf0-1).